A 130-amino-acid polypeptide reads, in one-letter code: Small ribosomal subunit protein uS9 (130 aa).

Residues 105–130 (TRDARMKERKKPGLKKARKASQFSKR) form a disordered region. Positions 111–130 (KERKKPGLKKARKASQFSKR) are enriched in basic residues.

It belongs to the universal ribosomal protein uS9 family.

In Lactiplantibacillus plantarum (strain ATCC BAA-793 / NCIMB 8826 / WCFS1) (Lactobacillus plantarum), this protein is Small ribosomal subunit protein uS9.